The chain runs to 543 residues: CTP synthase (543 aa).

The interval 1–265 (MTRYIFVTGG…DDFVVERFGL (265 aa)) is amidoligase domain. Ser-13 is a CTP binding site. Ser-13 contributes to the UTP binding site. ATP contacts are provided by residues 14–19 (SLGKGI) and Asp-71. 2 residues coordinate Mg(2+): Asp-71 and Glu-139. Residues 146 to 148 (DIE), 186 to 191 (KTKPTQ), and Lys-222 contribute to the CTP site. Residues 186 to 191 (KTKPTQ) and Lys-222 contribute to the UTP site. The Glutamine amidotransferase type-1 domain occupies 290 to 541 (TIAMVGKYME…VNAALAQKAK (252 aa)). Residue Gly-351 coordinates L-glutamine. The Nucleophile; for glutamine hydrolysis role is filled by Cys-378. L-glutamine contacts are provided by residues 379–382 (LGMQ), Glu-402, and Arg-469. Active-site residues include His-514 and Glu-516.

This sequence belongs to the CTP synthase family. As to quaternary structure, homotetramer.

The catalysed reaction is UTP + L-glutamine + ATP + H2O = CTP + L-glutamate + ADP + phosphate + 2 H(+). It carries out the reaction L-glutamine + H2O = L-glutamate + NH4(+). It catalyses the reaction UTP + NH4(+) + ATP = CTP + ADP + phosphate + 2 H(+). It functions in the pathway pyrimidine metabolism; CTP biosynthesis via de novo pathway; CTP from UDP: step 2/2. Allosterically activated by GTP, when glutamine is the substrate; GTP has no effect on the reaction when ammonia is the substrate. The allosteric effector GTP functions by stabilizing the protein conformation that binds the tetrahedral intermediate(s) formed during glutamine hydrolysis. Inhibited by the product CTP, via allosteric rather than competitive inhibition. Its function is as follows. Catalyzes the ATP-dependent amination of UTP to CTP with either L-glutamine or ammonia as the source of nitrogen. Regulates intracellular CTP levels through interactions with the four ribonucleotide triphosphates. This chain is CTP synthase, found in Ectopseudomonas mendocina (strain ymp) (Pseudomonas mendocina).